The sequence spans 91 residues: Small ribosomal subunit protein uS19 (91 aa).

Belongs to the universal ribosomal protein uS19 family.

In terms of biological role, protein S19 forms a complex with S13 that binds strongly to the 16S ribosomal RNA. This chain is Small ribosomal subunit protein uS19, found in Synechococcus sp. (strain WH7803).